Reading from the N-terminus, the 315-residue chain is Olfactory receptor 3A10 (315 aa).

Topologically, residues 1-28 (MEPGAWGNRTAVTDFILLGLTGNVRLQP) are extracellular. N-linked (GlcNAc...) asparagine glycosylation occurs at N8. Residues 29 to 49 (ILFVVFFFAYIVTVGGNLSIL) traverse the membrane as a helical segment. Residues 50 to 68 (AAIFVEPKLHTPMYYFLGN) are Cytoplasmic-facing. Residues 69–89 (LSLLDIGCISVTVPPMLVCLL) traverse the membrane as a helical segment. Topologically, residues 90 to 97 (AHECRVPY) are extracellular. The chain crosses the membrane as a helical span at residues 98-118 (AACISQLFFFHLLAGVDCHLL). The cysteines at positions 100 and 192 are disulfide-linked. Topologically, residues 119–145 (TAMAYDRYLAICQPLTYSTRMSREVQG) are cytoplasmic. The chain crosses the membrane as a helical span at residues 146 to 166 (TLVGICCTVSFINALTHTVAV). At 167 to 200 (SVLDFCGPNVVNHFYCDLPPLFQLSCSSIYLNGQ) the chain is on the extracellular side. Residues 201–221 (LLFVGATFMGVVPMILISVSY) form a helical membrane-spanning segment. Residues 222–239 (AHVAAAVLRIRSTEGRKK) lie on the Cytoplasmic side of the membrane. The helical transmembrane segment at 240–260 (AFSTCGSHLTVVCIFYGTGFF) threads the bilayer. The Extracellular segment spans residues 261–274 (SYMRLGSVSASDKD). A helical membrane pass occupies residues 275 to 295 (KGIGILNTILSPMLNPLIYSL). Topologically, residues 296 to 315 (RNPDVQGALKRVLTGKRYPV) are cytoplasmic.

Belongs to the G-protein coupled receptor 1 family.

The protein resides in the cell membrane. In terms of biological role, odorant receptor. The sequence is that of Olfactory receptor 3A10 from Mus musculus (Mouse).